We begin with the raw amino-acid sequence, 390 residues long: Protein-glutamate methylesterase/protein-glutamine glutaminase (390 aa).

In terms of domain architecture, Response regulatory spans R4–Q121. D55 is modified (4-aspartylphosphate). Residues G130–R198 are disordered. 2 stretches are compositionally biased toward low complexity: residues P136–D148 and E179–P193. The region spanning P201–R390 is the CheB-type methylesterase domain. Active-site residues include S212, H239, and D335.

The protein belongs to the CheB family. Post-translationally, phosphorylated by CheA. Phosphorylation of the N-terminal regulatory domain activates the methylesterase activity.

The protein resides in the cytoplasm. The enzyme catalyses [protein]-L-glutamate 5-O-methyl ester + H2O = L-glutamyl-[protein] + methanol + H(+). It carries out the reaction L-glutaminyl-[protein] + H2O = L-glutamyl-[protein] + NH4(+). Involved in chemotaxis. Part of a chemotaxis signal transduction system that modulates chemotaxis in response to various stimuli. Catalyzes the demethylation of specific methylglutamate residues introduced into the chemoreceptors (methyl-accepting chemotaxis proteins or MCP) by CheR. Also mediates the irreversible deamidation of specific glutamine residues to glutamic acid. The polypeptide is Protein-glutamate methylesterase/protein-glutamine glutaminase (Alkalilimnicola ehrlichii (strain ATCC BAA-1101 / DSM 17681 / MLHE-1)).